Reading from the N-terminus, the 528-residue chain is T-complex protein 1 subunit delta (528 aa).

This sequence belongs to the TCP-1 chaperonin family. Heterooligomeric complex of about 850 to 900 kDa that forms two stacked rings, 12 to 16 nm in diameter.

It is found in the cytoplasm. Molecular chaperone; assists the folding of proteins upon ATP hydrolysis. Known to play a role, in vitro, in the folding of actin and tubulin. In yeast may play a role in mitotic spindle formation. In Saccharomyces cerevisiae (strain ATCC 204508 / S288c) (Baker's yeast), this protein is T-complex protein 1 subunit delta (CCT4).